The chain runs to 158 residues: MAPPTIEIPQLPIPGEDNSAHPAQQIRLEQAAVPQQKRGMDLYFDKVVDFVGEHPVVGGIGGFVALYAAAGLWRAVSIRMNGGKEATKFLKGGFDPKMNTKEALAILNLTESTLTKKRVKDVHRKIMLANHPDKGGSPYLATKINEAKDFLEKRGIRK.

Topologically, residues Met-1 to Pro-55 are mitochondrial intermembrane. Residues Val-56 to Ile-78 form a helical membrane-spanning segment. Topologically, residues Arg-79–Lys-158 are mitochondrial matrix. A J domain is found at Glu-102–Lys-158.

Belongs to the TIM14 family. Heterodimer with PAM16. Component of the PAM complex, at least composed of mtHsp70, MGE1, TIM44, PAM16, PAM17 and PAM18.

It is found in the mitochondrion inner membrane. Essential component of the PAM complex, a complex required for the translocation of transit peptide-containing proteins from the inner membrane into the mitochondrial matrix in an ATP-dependent manner. In the complex, it is required to stimulate activity of mtHSP70 (SSC1). The chain is Mitochondrial import inner membrane translocase subunit TIM14 (PAM18) from Eremothecium gossypii (strain ATCC 10895 / CBS 109.51 / FGSC 9923 / NRRL Y-1056) (Yeast).